Here is a 155-residue protein sequence, read N- to C-terminus: 3-dehydroquinate dehydratase (155 aa).

The active-site Proton acceptor is tyrosine 32. Substrate is bound by residues asparagine 84, histidine 90, and aspartate 97. The active-site Proton donor is the histidine 110. Substrate is bound by residues 111–112 and arginine 121; that span reads LS.

Belongs to the type-II 3-dehydroquinase family. In terms of assembly, homododecamer.

The catalysed reaction is 3-dehydroquinate = 3-dehydroshikimate + H2O. Its pathway is metabolic intermediate biosynthesis; chorismate biosynthesis; chorismate from D-erythrose 4-phosphate and phosphoenolpyruvate: step 3/7. Functionally, catalyzes a trans-dehydration via an enolate intermediate. This chain is 3-dehydroquinate dehydratase, found in Ralstonia pickettii (strain 12J).